The primary structure comprises 166 residues: UPF0304 protein PBPRA2768 (166 aa).

The protein belongs to the UPF0304 family.

The polypeptide is UPF0304 protein PBPRA2768 (Photobacterium profundum (strain SS9)).